Consider the following 274-residue polypeptide: Diaminopimelate epimerase (274 aa).

3 residues coordinate substrate: Asn-11, Gln-44, and Asn-64. Catalysis depends on Cys-73, which acts as the Proton donor. Residues 74–75 (GN), Asn-157, Asn-190, and 208–209 (ER) each bind substrate. Residue Cys-217 is the Proton acceptor of the active site. Residue 218–219 (GS) coordinates substrate.

This sequence belongs to the diaminopimelate epimerase family. Homodimer.

It is found in the cytoplasm. It catalyses the reaction (2S,6S)-2,6-diaminopimelate = meso-2,6-diaminopimelate. It functions in the pathway amino-acid biosynthesis; L-lysine biosynthesis via DAP pathway; DL-2,6-diaminopimelate from LL-2,6-diaminopimelate: step 1/1. Functionally, catalyzes the stereoinversion of LL-2,6-diaminopimelate (L,L-DAP) to meso-diaminopimelate (meso-DAP), a precursor of L-lysine and an essential component of the bacterial peptidoglycan. This is Diaminopimelate epimerase from Escherichia fergusonii (strain ATCC 35469 / DSM 13698 / CCUG 18766 / IAM 14443 / JCM 21226 / LMG 7866 / NBRC 102419 / NCTC 12128 / CDC 0568-73).